The chain runs to 436 residues: Trigger factor (436 aa).

Residues 163–248 (GDRVVLDFAG…VKEVAEGVLP (86 aa)) enclose the PPIase FKBP-type domain.

Belongs to the FKBP-type PPIase family. Tig subfamily.

Its subcellular location is the cytoplasm. It catalyses the reaction [protein]-peptidylproline (omega=180) = [protein]-peptidylproline (omega=0). In terms of biological role, involved in protein export. Acts as a chaperone by maintaining the newly synthesized protein in an open conformation. Functions as a peptidyl-prolyl cis-trans isomerase. This is Trigger factor from Bordetella pertussis (strain Tohama I / ATCC BAA-589 / NCTC 13251).